Here is a 431-residue protein sequence, read N- to C-terminus: Glutamate-1-semialdehyde 2,1-aminomutase (431 aa).

The residue at position 269 (Lys-269) is an N6-(pyridoxal phosphate)lysine.

The protein belongs to the class-III pyridoxal-phosphate-dependent aminotransferase family. HemL subfamily. In terms of assembly, homodimer. Requires pyridoxal 5'-phosphate as cofactor.

The protein resides in the cytoplasm. The catalysed reaction is (S)-4-amino-5-oxopentanoate = 5-aminolevulinate. The protein operates within porphyrin-containing compound metabolism; protoporphyrin-IX biosynthesis; 5-aminolevulinate from L-glutamyl-tRNA(Glu): step 2/2. This Francisella tularensis subsp. tularensis (strain WY96-3418) protein is Glutamate-1-semialdehyde 2,1-aminomutase.